We begin with the raw amino-acid sequence, 217 residues long: tRNA (guanine-N(7)-)-methyltransferase (217 aa).

4 residues coordinate S-adenosyl-L-methionine: E44, E69, D96, and D118. D118 is a catalytic residue. Substrate contacts are provided by residues K122, D154, and 191 to 194 (TEYE).

The protein belongs to the class I-like SAM-binding methyltransferase superfamily. TrmB family.

The catalysed reaction is guanosine(46) in tRNA + S-adenosyl-L-methionine = N(7)-methylguanosine(46) in tRNA + S-adenosyl-L-homocysteine. The protein operates within tRNA modification; N(7)-methylguanine-tRNA biosynthesis. Its function is as follows. Catalyzes the formation of N(7)-methylguanine at position 46 (m7G46) in tRNA. This is tRNA (guanine-N(7)-)-methyltransferase from Bacillus anthracis (strain CDC 684 / NRRL 3495).